A 318-amino-acid chain; its full sequence is Aspartate carbamoyltransferase catalytic subunit (318 aa).

Residues R66 and T67 each contribute to the carbamoyl phosphate site. K94 is an L-aspartate binding site. R116, H144, and Q147 together coordinate carbamoyl phosphate. L-aspartate-binding residues include R177 and R231. Carbamoyl phosphate is bound by residues G272 and P273.

It belongs to the aspartate/ornithine carbamoyltransferase superfamily. ATCase family. Heterododecamer (2C3:3R2) of six catalytic PyrB chains organized as two trimers (C3), and six regulatory PyrI chains organized as three dimers (R2).

It carries out the reaction carbamoyl phosphate + L-aspartate = N-carbamoyl-L-aspartate + phosphate + H(+). It functions in the pathway pyrimidine metabolism; UMP biosynthesis via de novo pathway; (S)-dihydroorotate from bicarbonate: step 2/3. Its function is as follows. Catalyzes the condensation of carbamoyl phosphate and aspartate to form carbamoyl aspartate and inorganic phosphate, the committed step in the de novo pyrimidine nucleotide biosynthesis pathway. In Frankia casuarinae (strain DSM 45818 / CECT 9043 / HFP020203 / CcI3), this protein is Aspartate carbamoyltransferase catalytic subunit.